The primary structure comprises 91 residues: Antitoxin RelJ (91 aa).

The protein belongs to the phD/YefM antitoxin family. As to quaternary structure, homodimer.

In terms of biological role, antitoxin component of a type II toxin-antitoxin (TA) system. A probable antitoxin for the putative mRNA interferase RelK. The sequence is that of Antitoxin RelJ (relJ) from Mycobacterium tuberculosis (strain CDC 1551 / Oshkosh).